Here is a 482-residue protein sequence, read N- to C-terminus: Anthranilate synthase component 1 (482 aa).

L-tryptophan is bound by residues Ser-47 and 267–269 (PYM). Position 302 to 303 (302 to 303 (GT)) interacts with chorismate. Glu-329 is a binding site for Mg(2+). Chorismate is bound by residues Tyr-417, Arg-437, 451-453 (GGG), and Gly-453. Position 466 (Glu-466) interacts with Mg(2+).

Belongs to the anthranilate synthase component I family. As to quaternary structure, heterotetramer consisting of two non-identical subunits: a beta subunit (TrpG) and a large alpha subunit (TrpE). Requires Mg(2+) as cofactor.

It catalyses the reaction chorismate + L-glutamine = anthranilate + pyruvate + L-glutamate + H(+). Its pathway is amino-acid biosynthesis; L-tryptophan biosynthesis; L-tryptophan from chorismate: step 1/5. Its activity is regulated as follows. Feedback inhibited by tryptophan. Its function is as follows. Part of a heterotetrameric complex that catalyzes the two-step biosynthesis of anthranilate, an intermediate in the biosynthesis of L-tryptophan. In the first step, the glutamine-binding beta subunit (TrpG) of anthranilate synthase (AS) provides the glutamine amidotransferase activity which generates ammonia as a substrate that, along with chorismate, is used in the second step, catalyzed by the large alpha subunit of AS (TrpE) to produce anthranilate. In the absence of TrpG, TrpE can synthesize anthranilate directly from chorismate and high concentrations of ammonia. This is Anthranilate synthase component 1 (trpE) from Spirochaeta aurantia.